Reading from the N-terminus, the 279-residue chain is MNVLQAPFVEEMVKTTKNLYRLGWDERNGGNISYLLKEEEILPFLNPTQVLRKIPMKFDATKLAGKYFIVTGSGKYFKNVCDASSENLGILRVSENGQELELLWGLEDEAVPTSELPSHFMSHIARLAVDPENRIVMHNHASHLLAMSFTHELDEKVFTRTLWQMCTECLVVFPDGVGIIPWLVPGTNEIGVATAEKMKESRLVLWPQHGIYGTGRDMDEVFGLIETAEKAAEVYTYVCAQGGVRQTISDADLWRLAEAFGVTPKVGYLEEKVSKRRKL.

Residue Glu115 is part of the active site. Residues His138, His140, and His209 each contribute to the Zn(2+) site.

It belongs to the aldolase class II family. RhaD subfamily. Zn(2+) serves as cofactor.

Its subcellular location is the cytoplasm. The enzyme catalyses L-rhamnulose 1-phosphate = (S)-lactaldehyde + dihydroxyacetone phosphate. The protein operates within carbohydrate degradation; L-rhamnose degradation; glycerone phosphate from L-rhamnose: step 3/3. Functionally, catalyzes the reversible cleavage of L-rhamnulose-1-phosphate to dihydroxyacetone phosphate (DHAP) and L-lactaldehyde. This is Rhamnulose-1-phosphate aldolase from Enterococcus faecalis (strain ATCC 700802 / V583).